We begin with the raw amino-acid sequence, 156 residues long: Small ribosomal subunit protein uS7 (156 aa).

It belongs to the universal ribosomal protein uS7 family. As to quaternary structure, part of the 30S ribosomal subunit. Contacts proteins S9 and S11.

In terms of biological role, one of the primary rRNA binding proteins, it binds directly to 16S rRNA where it nucleates assembly of the head domain of the 30S subunit. Is located at the subunit interface close to the decoding center, probably blocks exit of the E-site tRNA. The chain is Small ribosomal subunit protein uS7 from Citrifermentans bemidjiense (strain ATCC BAA-1014 / DSM 16622 / JCM 12645 / Bem) (Geobacter bemidjiensis).